Consider the following 910-residue polypeptide: Chitin synthase A (910 aa).

The segment at 56–156 (NYHDDYDPRP…EPAPTPTPAP (101 aa)) is disordered. Composition is skewed to basic and acidic residues over residues 57–84 (YHDDYDPRPGGRRHDSDYSLDPNAHHDA) and 130–148 (DPHDPDRDPHPDDPFHDEP). 9 helical membrane passes run 366 to 386 (WFFQAFGQVLDPNICVLIDAG), 448 to 468 (SAFGFITVLPGAFSAYRYVAL), 583 to 603 (VYQTISMLFAWFALGNFFLVF), 620 to 640 (VLFIVFEWLYIAVLITCFILS), 655 to 675 (MVYFWGVIMAYLMFASIFITV), 701 to 721 (TLIISLLSTYVMWLVVSIIFL), 730 to 750 (FIQYLLMTPTYINILNVYAFC), 828 to 848 (GVVLFWMFCNLALTALVLQAG), and 876 to 896 (LYSVAGLAAFRFIGAMWFLVV).

The protein belongs to the chitin synthase family. Class I subfamily.

It localises to the cell membrane. The enzyme catalyses [(1-&gt;4)-N-acetyl-beta-D-glucosaminyl](n) + UDP-N-acetyl-alpha-D-glucosamine = [(1-&gt;4)-N-acetyl-beta-D-glucosaminyl](n+1) + UDP + H(+). Its function is as follows. Polymerizes chitin, a structural polymer of the cell wall and septum, by transferring the sugar moiety of UDP-GlcNAc to the non-reducing end of the growing chitin polymer. This Ampelomyces quisqualis (Powdery mildew agent) protein is Chitin synthase A (CHSA).